Reading from the N-terminus, the 536-residue chain is MIQKCIALSLFLFSALPEDNIVRALSLSPNNPKSNVVMVMSDAFDGRLTLLPENGLVSLPYINFMKKHGALFLNAYTNSPICCPSRAAMWSGLFPHLTESWNNYKCLDSDYPTWMDIVEKNGYVTQRLGKQDYKSGSHSLSNRVEAWTRDVPFLLRQEGRPCANLTGNKTQTRVMALDWKNVDTATAWIQKAAQNHSQPFFLYLGLNLPHPYPSETMGENFGSSTFLTSPYWLQKVPYKNVTIPKWKPLQSMHPVDYYSSYTKNCTAPFTEQEIRDIRAYYYAMCAEADGLLGEIISALNDTGLLGRTYVVFTSDHGELAMEHRQFYKMSMYEGSSHIPLLIMGPRISPGQQISTVVSLVDLYPTMLEIAGVQIPQNISGYSLMPLLSASSNKNVSPSISVHPNWAMSEFHGSDANASTYMLWDNYWKYVAYADGDSVAPQLFDLSSDPDELTNVAGQVPEKVQEMDKKLRSIVDYPKVSASVHVYNKQQFALWKASVGANYTNVIANLRWHADWNKRPRAYEMAIEKWIKSTRQH.

The N-terminal stretch at 1–24 (MIQKCIALSLFLFSALPEDNIVRA) is a signal peptide. Residues D42 and C82 each coordinate Ca(2+). C82 functions as the Nucleophile in the catalytic mechanism. C82 is modified (3-oxoalanine (Cys)). K130 is a substrate binding site. N195 carries N-linked (GlcNAc...) asparagine glycosylation. H253 provides a ligand contact to substrate. N-linked (GlcNAc...) asparagine glycosylation occurs at N264. 2 residues coordinate Ca(2+): D315 and H316. N-linked (GlcNAc...) asparagine glycosylation is found at N377, N416, and N501.

Belongs to the sulfatase family. It depends on Ca(2+) as a cofactor. In terms of processing, the conversion to 3-oxoalanine (also known as C-formylglycine, FGly), of a serine or cysteine residue in prokaryotes and of a cysteine residue in eukaryotes, is critical for catalytic activity.

The protein resides in the secreted. Its subcellular location is the lysosome. The enzyme catalyses an aryl sulfate + H2O = a phenol + sulfate + H(+). It carries out the reaction Hydrolysis of the 2-sulfate groups of the 2-O-sulfo-D-glucuronate residues of chondroitin sulfate, heparin and heparitin sulfate.. Catalyzes the hydrolysis of pseudosubstrates such as p-nitrocatechol sulfate and p-nitrophenyl sulfate. Catalyzes the hydrolysis of the 2-sulfate groups of the 2-O-sulfo-D-glucuronate residues of chondroitin sulfate, heparin and heparitin sulfate. Acts selectively on 2-sulfoglucuronate and lacks activity against 2-sulfoiduronate. This chain is Arylsulfatase K (arsk), found in Xenopus laevis (African clawed frog).